We begin with the raw amino-acid sequence, 194 residues long: Peptidyl-tRNA hydrolase (194 aa).

A tRNA-binding site is contributed by Y16. H21 serves as the catalytic Proton acceptor. TRNA contacts are provided by Y67, N69, and N115.

The protein belongs to the PTH family. As to quaternary structure, monomer.

The protein resides in the cytoplasm. It carries out the reaction an N-acyl-L-alpha-aminoacyl-tRNA + H2O = an N-acyl-L-amino acid + a tRNA + H(+). Hydrolyzes ribosome-free peptidyl-tRNAs (with 1 or more amino acids incorporated), which drop off the ribosome during protein synthesis, or as a result of ribosome stalling. Its function is as follows. Catalyzes the release of premature peptidyl moieties from peptidyl-tRNA molecules trapped in stalled 50S ribosomal subunits, and thus maintains levels of free tRNAs and 50S ribosomes. The chain is Peptidyl-tRNA hydrolase from Synechocystis sp. (strain ATCC 27184 / PCC 6803 / Kazusa).